Here is a 405-residue protein sequence, read N- to C-terminus: Glucose-1-phosphate adenylyltransferase 1 (405 aa).

Alpha-D-glucose 1-phosphate is bound by residues Tyr-96, Gly-161, Glu-176–Lys-177, and Ser-194.

Belongs to the bacterial/plant glucose-1-phosphate adenylyltransferase family. As to quaternary structure, homotetramer.

The enzyme catalyses alpha-D-glucose 1-phosphate + ATP + H(+) = ADP-alpha-D-glucose + diphosphate. It functions in the pathway glycan biosynthesis; glycogen biosynthesis. In terms of biological role, involved in the biosynthesis of ADP-glucose, a building block required for the elongation reactions to produce glycogen. Catalyzes the reaction between ATP and alpha-D-glucose 1-phosphate (G1P) to produce pyrophosphate and ADP-Glc. In Vibrio parahaemolyticus serotype O3:K6 (strain RIMD 2210633), this protein is Glucose-1-phosphate adenylyltransferase 1.